The sequence spans 847 residues: B-cell receptor CD22 (847 aa).

Residues 1–19 (MHLLGPWLLLLVLEYLAFS) form the signal peptide. The region spanning 20–138 (DSSKWVFEHP…MERIHLNVSE (119 aa)) is the Ig-like V-type domain. At 20–687 (DSSKWVFEHP…YYSPETIGRR (668 aa)) the chain is on the extracellular side. 3 disulfide bridges follow: Cys39–Cys167, Cys44–Cys102, and Cys161–Cys219. N-linked (GlcNAc...) asparagine glycans are attached at residues Asn67, Asn101, and Asn112. Arg120 contributes to the N-acetylneuraminate binding site. Residues Asn135, Asn164, and Asn231 are each glycosylated (N-linked (GlcNAc...) asparagine). Ig-like C2-type domains lie at 143–235 (PHIQ…DTVQ), 242–326 (PKLE…VFLQ), 331–416 (PEPS…LDVQ), 419–500 (PKKV…VALN), 505–582 (PRDV…QTAS), and 593–676 (PRRL…STLT). 4 disulfides stabilise this stretch: Cys265–Cys309, Cys353–Cys396, Cys442–Cys484, and Cys529–Cys571. Asn363, Asn445, and Asn479 each carry an N-linked (GlcNAc...) asparagine glycan. Asn574 and Asn634 each carry an N-linked (GlcNAc...) asparagine glycan. Cys616 and Cys659 are joined by a disulfide. The chain crosses the membrane as a helical span at residues 688–706 (VAVGLGSCLAILILAICGL). Residues 707–847 (KLQRRWKRTQ…ENVDYVILKH (141 aa)) lie on the Cytoplasmic side of the membrane. 3 positions are modified to phosphoserine: Ser725, Ser726, and Ser729. 2 consecutive short sequence motifs (ITIM motif) follow at residues 760–765 (ISYTTL) and 794–799 (VTYSAL). At Tyr762 the chain carries Phosphotyrosine. Residues Tyr807, Tyr822, and Tyr842 each carry the phosphotyrosine modification. 2 consecutive short sequence motifs (ITIM motif) follow at residues 820-825 (IHYSEL) and 840-845 (VDYVIL).

Belongs to the immunoglobulin superfamily. SIGLEC (sialic acid binding Ig-like lectin) family. In terms of assembly, predominantly monomer of isoform CD22-beta. Also found as heterodimer of isoform CD22-beta and a shorter isoform. Interacts with PTPN6/SHP-1, LYN, SYK, PIK3R1/PIK3R2 and PLCG1 upon phosphorylation. Interacts with GRB2, INPP5D and SHC1 upon phosphorylation. May form a complex with INPP5D/SHIP, GRB2 and SHC1. Phosphorylation of Tyr-762, Tyr-807 and Tyr-822 are involved in binding to SYK, GRB2 and SYK, respectively. Phosphorylation of Tyr-842 is involved in binding to SYK, PLCG2 and PIK3R1/PIK3R2. In terms of processing, phosphorylated on tyrosine residues by LYN. B-lymphocytes.

It is found in the cell membrane. In terms of biological role, most highly expressed siglec (sialic acid-binding immunoglobulin-like lectin) on B-cells that plays a role in various aspects of B-cell biology including differentiation, antigen presentation, and trafficking to bone marrow. Binds to alpha 2,6-linked sialic acid residues of surface molecules such as CD22 itself, CD45 and IgM in a cis configuration. Can also bind to ligands on other cells as an adhesion molecule in a trans configuration. Acts as an inhibitory coreceptor on the surface of B-cells and inhibits B-cell receptor induced signaling, characterized by inhibition of the calcium mobilization and cellular activation. Mechanistically, the immunoreceptor tyrosine-based inhibitory motif domain is phosphorylated by the Src kinase LYN, which in turn leads to the recruitment of the protein tyrosine phosphatase 1/PTPN6, leading to the negative regulation of BCR signaling. If this negative signaling from is of sufficient strength, apoptosis of the B-cell can be induced. In Homo sapiens (Human), this protein is B-cell receptor CD22.